The following is a 322-amino-acid chain: Phthalate dioxygenase reductase (322 aa).

The FAD-binding FR-type domain occupies 7 to 109 (DGFLRLKIAS…SLPRNEFPLD (103 aa)). Residues 56–57 (RT), 73–75 (AVK), 81–84 (RGGS), Thr125, and Phe226 each bind FMN. The region spanning 239–322 (FTVRLSRSGT…AKSAELVLDL (84 aa)) is the 2Fe-2S ferredoxin-type domain. Cys273 is a [2Fe-2S] cluster binding site. Ser275 serves as a coordination point for FMN. [2Fe-2S] cluster contacts are provided by Cys278, Cys281, and Cys309.

The protein belongs to the PDR/VanB family. In terms of assembly, monomer. FMN is required as a cofactor.

Functionally, component of the electron transfer chain involved in pyridine nucleotide-dependent dihydroxylation of phthalate. Utilizes FMN to mediate electron transfer from the two-electron donor, NADH, to the one-electron acceptor, (2Fe-2S). The chain is Phthalate dioxygenase reductase (ophA1) from Burkholderia cepacia (Pseudomonas cepacia).